Consider the following 600-residue polypeptide: Aspartate--tRNA(Asp/Asn) ligase (600 aa).

Glu187 serves as a coordination point for L-aspartate. An aspartate region spans residues 211–214 (QIFK). 2 residues coordinate L-aspartate: Arg233 and His463. An ATP-binding site is contributed by 233 to 235 (RDE). Glu497 contacts ATP. An L-aspartate-binding site is contributed by Arg504. 549 to 552 (GVDR) serves as a coordination point for ATP.

This sequence belongs to the class-II aminoacyl-tRNA synthetase family. Type 1 subfamily. Homodimer.

The protein resides in the cytoplasm. The enzyme catalyses tRNA(Asx) + L-aspartate + ATP = L-aspartyl-tRNA(Asx) + AMP + diphosphate. Aspartyl-tRNA synthetase with relaxed tRNA specificity since it is able to aspartylate not only its cognate tRNA(Asp) but also tRNA(Asn). Reaction proceeds in two steps: L-aspartate is first activated by ATP to form Asp-AMP and then transferred to the acceptor end of tRNA(Asp/Asn). The sequence is that of Aspartate--tRNA(Asp/Asn) ligase from Wolbachia sp. subsp. Drosophila simulans (strain wRi).